A 347-amino-acid chain; its full sequence is Aspartate-semialdehyde dehydrogenase (347 aa).

NADP(+) contacts are provided by residues 10-13 and 37-38; these read TGMV and RS. Arg108 is a binding site for phosphate. The Acyl-thioester intermediate role is filled by Cys147. Gln174 contributes to the substrate binding site. 177-178 contacts NADP(+); the sequence is SG. Glu200 serves as a coordination point for substrate. A phosphate-binding site is contributed by Lys203. Arg233 is a binding site for substrate. His240 serves as the catalytic Proton acceptor. The segment at 276–299 is disordered; it reads APEKPVVVRDEENRPQPRMDRDMD. Over residues 281-299 the composition is skewed to basic and acidic residues; the sequence is VVVRDEENRPQPRMDRDMD. NADP(+) is bound at residue 327–328; that stretch reads NT.

It belongs to the aspartate-semialdehyde dehydrogenase family. Homodimer.

The catalysed reaction is L-aspartate 4-semialdehyde + phosphate + NADP(+) = 4-phospho-L-aspartate + NADPH + H(+). The protein operates within amino-acid biosynthesis; L-lysine biosynthesis via DAP pathway; (S)-tetrahydrodipicolinate from L-aspartate: step 2/4. It functions in the pathway amino-acid biosynthesis; L-methionine biosynthesis via de novo pathway; L-homoserine from L-aspartate: step 2/3. Its pathway is amino-acid biosynthesis; L-threonine biosynthesis; L-threonine from L-aspartate: step 2/5. Its function is as follows. Catalyzes the NADPH-dependent formation of L-aspartate-semialdehyde (L-ASA) by the reductive dephosphorylation of L-aspartyl-4-phosphate. The protein is Aspartate-semialdehyde dehydrogenase of Methanothermobacter thermautotrophicus (strain ATCC 29096 / DSM 1053 / JCM 10044 / NBRC 100330 / Delta H) (Methanobacterium thermoautotrophicum).